Reading from the N-terminus, the 514-residue chain is Sugar transport protein 11 (514 aa).

Over 1–19 (MAGGAFIDESGHGGDYEGR) the chain is Cytoplasmic. The helical transmembrane segment at 20 to 40 (VTAFVMITCIVAAMGGLLFGY) threads the bilayer. At 41–82 (DIGISGGVISMEDFLTKFFPDVLRQMQNKRGRETEYCKYDNE) the chain is on the extracellular side. Residues 83 to 103 (LLTLFTSSLYLAALFASFLAS) traverse the membrane as a helical segment. Residues 104 to 112 (TITRLFGRK) are Cytoplasmic-facing. A helical membrane pass occupies residues 113-133 (VSMVIGSLAFLSGALLNGLAI). The Extracellular segment spans residues 134–137 (NLEM). The chain crosses the membrane as a helical span at residues 138-158 (LIIGRLFLGVGVGFANQSVPL). Over 159–169 (YLSEMAPAKIR) the chain is Cytoplasmic. The chain crosses the membrane as a helical span at residues 170–190 (GALNIGFQLAITIGILAANIV). The Extracellular portion of the chain corresponds to 191–204 (NYVTPKLQNGIGWR). The helical transmembrane segment at 205–225 (LSLGLAGVPAVMMLVGCFFLP) threads the bilayer. The Cytoplasmic portion of the chain corresponds to 226–290 (DTPNSILERG…RYRPQLTFCT (65 aa)). Residues 291-311 (FIPFFQQLTGINVIMFYAPVL) form a helical membrane-spanning segment. Over 312–320 (FKTIGFGND) the chain is Extracellular. The helical transmembrane segment at 321–341 (ASLISAVITGLVNVLSTIVSI) threads the bilayer. Over 342–350 (YSVDKFGRR) the chain is Cytoplasmic. A helical transmembrane segment spans residues 351–371 (ALFLQGGFQMIVTQIAVGSMI). The Extracellular portion of the chain corresponds to 372–389 (GWKFGFNGEGNLSGVDAD). A helical membrane pass occupies residues 390-410 (IILALICLYVAGFAWSWGPLG). The Cytoplasmic segment spans residues 411 to 428 (WLVPSEICPLEIRSAGQS). A helical transmembrane segment spans residues 429-449 (LNVSVNMFFTFFIGQFFLTML). The Extracellular portion of the chain corresponds to 450-453 (CHMK). A helical transmembrane segment spans residues 454–474 (FGLFYFFAGMVLIMTIFIYFL). The Cytoplasmic segment spans residues 475-514 (LPETKGVPIEEMGKVWKEHRYWGKYSNNDDGDDVDDDAYF).

Belongs to the major facilitator superfamily. Sugar transporter (TC 2.A.1.1) family. Specifically expressed in germinating pollen and pollen tube (at protein level).

It localises to the cell membrane. Inhibited by uncouplers such as 2,4-dinitrophenol and carbonyl cyanide-m-chlorophenyl-hydrazone. Its function is as follows. Mediates an active uptake of hexoses, probably by sugar/hydrogen symport. Can transport glucose, galactose, mannose, xylose and 3-O-methylglucose, but not fructose and ribose. The sequence is that of Sugar transport protein 11 (STP11) from Arabidopsis thaliana (Mouse-ear cress).